The following is a 1507-amino-acid chain: ABC multidrug transporter SNQ2 (1507 aa).

The segment at 1–73 is disordered; it reads MSSSSEISVA…RSSTAELSPE (73 aa). A compositionally biased stretch (basic and acidic residues) spans 41–55; the sequence is RSHEDADGDDAHSDN. 2 N-linked (GlcNAc...) asparagine glycosylation sites follow: Asn55 and Asn336. Residues 157–412 enclose the ABC transporter 1 domain; it reads CLPYTIYKAI…FYRMGYECPP (256 aa). The next 3 helical transmembrane spans lie at 522-542, 556-576, and 605-625; these read AYTV…GSLY, GGVL…NLSF, and FPFR…LSGL. The N-linked (GlcNAc...) asparagine glycan is linked to Asn626. A helical membrane pass occupies residues 635-655; the sequence is VYLFLTMCSESINALFELIAA. Asn659 is a glycosylation site (N-linked (GlcNAc...) asparagine). 2 consecutive transmembrane segments (helical) span residues 665–685 and 773–793; these read SISG…IQLP and FGIM…ITEI. The ABC transporter 2 domain maps to 857 to 1099; sequence FIWRNVCYTI…LLSYFERNGA (243 aa). N-linked (GlcNAc...) asparagine glycosylation is present at Asn878. ATP is bound at residue 893–900; sequence GESGAGKT. Transmembrane regions (helical) follow at residues 1193–1213, 1220–1240, and 1270–1290; these read YIMS…FTFY, TGLQ…APAM, and LITQ…IFFV. Asn1311 carries N-linked (GlcNAc...) asparagine glycosylation. 2 helical membrane passes run 1314–1334 and 1339–1359; these read IMFQ…APNL and VILG…QPVS. The N-linked (GlcNAc...) asparagine glycan is linked to Asn1428. The helical transmembrane segment at 1459–1479 threads the bilayer; that stretch reads FGLYWAYIGFNICAMVAIYYI.

The protein belongs to the ABC transporter superfamily. ABCG family. PDR (TC 3.A.1.205) subfamily.

Its subcellular location is the cell membrane. Its function is as follows. ABC multidrug transporter involved in the response to azoles such as fluconazole, itraconazole, ketoconazole and voriconazole and contributes to the development of PDR1-dependent azole resistance. Plays a role in biofilm tolerance to fluconazole. Also confers resistance to 4-nitroquinoline-N-oxide (4-NQO). The polypeptide is ABC multidrug transporter SNQ2 (Candida glabrata (strain ATCC 2001 / BCRC 20586 / JCM 3761 / NBRC 0622 / NRRL Y-65 / CBS 138) (Yeast)).